The primary structure comprises 662 residues: DNA ligase (662 aa).

NAD(+) is bound by residues 34–38 (DYDYD), 83–84 (SI), and E113. K115 functions as the N6-AMP-lysine intermediate in the catalytic mechanism. The NAD(+) site is built by R136, E172, K286, and K310. Positions 404, 407, 422, and 427 each coordinate Zn(2+). Positions 583–662 (RESSSCLGKT…NDLLKILYPN (80 aa)) constitute a BRCT domain.

The protein belongs to the NAD-dependent DNA ligase family. LigA subfamily. It depends on Mg(2+) as a cofactor. Mn(2+) is required as a cofactor.

The enzyme catalyses NAD(+) + (deoxyribonucleotide)n-3'-hydroxyl + 5'-phospho-(deoxyribonucleotide)m = (deoxyribonucleotide)n+m + AMP + beta-nicotinamide D-nucleotide.. DNA ligase that catalyzes the formation of phosphodiester linkages between 5'-phosphoryl and 3'-hydroxyl groups in double-stranded DNA using NAD as a coenzyme and as the energy source for the reaction. It is essential for DNA replication and repair of damaged DNA. The polypeptide is DNA ligase (Chlamydia caviae (strain ATCC VR-813 / DSM 19441 / 03DC25 / GPIC) (Chlamydophila caviae)).